Here is a 217-residue protein sequence, read N- to C-terminus: FMN-dependent NADH:quinone oxidoreductase (217 aa).

FMN is bound by residues serine 10 and 16–18 (SVS).

The protein belongs to the azoreductase type 1 family. As to quaternary structure, homodimer. FMN is required as a cofactor.

The catalysed reaction is 2 a quinone + NADH + H(+) = 2 a 1,4-benzosemiquinone + NAD(+). It catalyses the reaction N,N-dimethyl-1,4-phenylenediamine + anthranilate + 2 NAD(+) = 2-(4-dimethylaminophenyl)diazenylbenzoate + 2 NADH + 2 H(+). Functionally, quinone reductase that provides resistance to thiol-specific stress caused by electrophilic quinones. Its function is as follows. Also exhibits azoreductase activity. Catalyzes the reductive cleavage of the azo bond in aromatic azo compounds to the corresponding amines. This is FMN-dependent NADH:quinone oxidoreductase from Polaromonas naphthalenivorans (strain CJ2).